The chain runs to 97 residues: U-scoloptoxin(10)-Ssd2a (97 aa).

The first 23 residues, 1 to 23 (MNKSMLIFFTILFLTYIIEEKEA), serve as a signal peptide directing secretion.

Post-translationally, contains 3 disulfide bonds. In terms of tissue distribution, expressed by the venom gland.

The protein resides in the secreted. The sequence is that of U-scoloptoxin(10)-Ssd2a from Scolopendra dehaani (Thai centipede).